The chain runs to 1154 residues: Spike glycoprotein (1154 aa).

Residues 1–18 (MLERSLLLATLLSALCSA) form the signal peptide. At 19–1096 (NLFGNNSYVY…LKTYIKWPWY (1078 aa)) the chain is on the extracellular side. N-linked (GlcNAc...) asparagine; by host glycans are attached at residues asparagine 23, asparagine 74, asparagine 102, asparagine 139, asparagine 145, asparagine 164, asparagine 179, asparagine 213, asparagine 238, asparagine 248, asparagine 265, asparagine 272, asparagine 277, asparagine 307, asparagine 426, asparagine 448, asparagine 514, asparagine 531, asparagine 543, asparagine 580, asparagine 592, asparagine 670, and asparagine 677. The tract at residues 770–875 (IPFATQLQAR…QVDRIITGRL (106 aa)) is heptad repeat 1 (HR1). Positions 823-867 (QDVVNKQSSILTETMASLNKNFGAISSVLQDIYQQLDSIQADAQV) form a coiled coil. N-linked (GlcNAc...) asparagine; by host glycosylation is found at asparagine 948, asparagine 961, asparagine 980, asparagine 1015, asparagine 1039, asparagine 1052, and asparagine 1075. The segment at 1025-1106 (NDDFDFDDEL…VWLAIAFATI (82 aa)) is heptad repeat 2 (HR2). Residues 1056 to 1084 (PILDIGSEIDRIQGVIQGLNDSLIDLETL) are a coiled coil. The chain crosses the membrane as a helical span at residues 1097–1117 (VWLAIAFATIIFILILGWLFF). Over 1118-1154 (MTGCCGCCCGCFGIIPLMSKCGKKSSYYTTFDNDVVT) the chain is Cytoplasmic.

The protein belongs to the gammacoronaviruses spike protein family. Homotrimer; each monomer consists of a S1 and a S2 subunit. The resulting peplomers protrude from the virus surface as spikes. Specific enzymatic cleavages in vivo yield mature proteins. The precursor is processed into S1 and S2 by host cell furin or furin-like protease to yield the mature S1 and S2 proteins. The cleavage site between S1 and S2 requires the optimal sequence [KR]-X-[KR]-R. Additionally, a second cleavage leads to the release of a fusion peptide after viral attachment to host cell receptor.

The protein localises to the virion membrane. It localises to the host endoplasmic reticulum-Golgi intermediate compartment membrane. Attaches the virion to the host cell membrane by interacting with sialic acids, initiating the infection. In terms of biological role, mediates fusion of the virion and cellular membranes by acting as a class I viral fusion protein. Under the current model, the protein has at least 3 conformational states: pre-fusion native state, pre-hairpin intermediate state, and post-fusion hairpin state. During viral and target cell membrane fusion, the coiled coil regions (heptad repeats) assume a trimer-of-hairpins structure, positioning the fusion peptide in close proximity to the C-terminal region of the ectodomain. The formation of this structure appears to drive apposition and subsequent fusion of viral and target cell membranes. Its function is as follows. Acts as a viral fusion peptide after S2 cleavage occurring upon virus endocytosis. The protein is Spike glycoprotein of Gallus gallus (Chicken).